Consider the following 415-residue polypeptide: Vascular endothelial growth factor C (415 aa).

A signal peptide spans Met-1–Ala-31. A propeptide spanning residues Phe-32–Ala-107 is cleaved from the precursor. Intrachain disulfides connect Cys-127–Cys-169, Cys-158–Cys-205, and Cys-162–Cys-207. 3 N-linked (GlcNAc...) asparagine glycosylation sites follow: Asn-171, Asn-201, and Asn-236. Residues Ser-224–Asn-415 constitute a propeptide that is removed on maturation. 4 consecutive repeat copies span residues Cys-276 to Cys-291, Cys-300 to Cys-315, Cys-324 to Cys-339, and Cys-343 to Cys-358. The segment at Cys-276 to Cys-358 is 4 X 16 AA repeats of C-X(10)-C-X-C-X(1,3)-C.

The protein belongs to the PDGF/VEGF growth factor family. In terms of assembly, homodimer; non-covalent and antiparallel. Interacts with FLT4/VEGFR3; the interaction is required for FLT4/VEGFR3 homodimarization and activation. Post-translationally, undergoes a complex proteolytic maturation which generates a variety of processed secreted forms with increased activity toward VEGFR-3, but only the fully processed form could activate VEGFR-2. VEGF-C first form an antiparallel homodimer linked by disulfide bonds. Before secretion, a cleavage occurs between Arg-223 and Ser-224 producing a heterotetramer. The next extracellular step of the processing removes the N-terminal propeptide. Finally the mature VEGF-C is composed mostly of two VEGF homology domains (VHDs) bound by non-covalent interactions. As to expression, highly expressed in the lung, ovary, preputial gland and the adrenal gland. Expressed in the post-pubertal mammary glands.

It is found in the secreted. Growth factor active in angiogenesis, and endothelial cell growth, stimulating their proliferation and migration and also has effects on the permeability of blood vessels. May function in angiogenesis of the venous and lymphatic vascular systems during embryogenesis, and also in the maintenance of differentiated lymphatic endothelium in adults. Binds and activates KDR/VEGFR2 and FLT4/VEGFR3 receptors. The sequence is that of Vascular endothelial growth factor C (Vegfc) from Rattus norvegicus (Rat).